The chain runs to 498 residues: Ulvan-active sulfatase (498 aa).

A signal peptide spans 1–22 (MNSKKTGVIILGCIAFLHIACS). The Ca(2+) site is built by aspartate 55, aspartate 56, cysteine 95, aspartate 266, and histidine 267. The Nucleophile role is filled by cysteine 95. At cysteine 95 the chain carries 3-oxoalanine (Cys).

It belongs to the sulfatase family. The cofactor is Ca(2+). The conversion to 3-oxoalanine (also known as C-formylglycine, FGly), of a serine or cysteine residue in prokaryotes and of a cysteine residue in eukaryotes, is critical for catalytic activity. This post-translational modification is severely defective in multiple sulfatase deficiency (MSD).

It is found in the periplasm. Sulfatase involved in ulvan degradation. Ulvan is the main polysaccharide component of the Ulvales (green seaweed) cell wall. It is composed of disaccharide building blocks comprising 3-sulfated rhamnose (Rha3S) linked to D-glucuronic acid (GlcA), L-iduronic acid (IduA), or D-xylose (Xyl). This is Ulvan-active sulfatase from Formosa agariphila (strain DSM 15362 / KCTC 12365 / LMG 23005 / KMM 3901 / M-2Alg 35-1).